A 34-amino-acid chain; its full sequence is uncharacterized protein (34 aa).

A helical membrane pass occupies residues 10–30; sequence LIITSSFFAIAVVLVLSVLLI.

It is found in the membrane. This is an uncharacterized protein from Shigella flexneri.